The chain runs to 215 residues: N-(5'-phosphoribosyl)anthranilate isomerase (215 aa).

The protein belongs to the TrpF family.

It catalyses the reaction N-(5-phospho-beta-D-ribosyl)anthranilate = 1-(2-carboxyphenylamino)-1-deoxy-D-ribulose 5-phosphate. Its pathway is amino-acid biosynthesis; L-tryptophan biosynthesis; L-tryptophan from chorismate: step 3/5. This is N-(5'-phosphoribosyl)anthranilate isomerase from Pelodictyon phaeoclathratiforme (strain DSM 5477 / BU-1).